The chain runs to 230 residues: Alpha-S1-casein (230 aa).

A signal peptide spans 1-15 (MKLLILTCLVAVALA). Residues S33, S83, S85, S86, S87, and S88 each carry the phosphoserine modification. Positions 60–83 (DELKDTRNEPTEDHIMEDTERKES) are enriched in basic and acidic residues. Disordered regions lie at residues 60 to 103 (DELK…DILK) and 211 to 230 (TPEG…PQWW). Low complexity predominate over residues 84 to 96 (GSSSSEEVVSSTT).

The protein belongs to the alpha-casein family. As to expression, mammary gland specific. Secreted in milk.

Its subcellular location is the secreted. In terms of biological role, important role in the capacity of milk to transport calcium phosphate. In Camelus dromedarius (Dromedary), this protein is Alpha-S1-casein (CSN1S1).